The chain runs to 430 residues: Agropine synthesis reductase (430 aa).

203–227 (LVSGSNRGVGKAIAEDLIAHGYRLS) is a binding site for NAD(+). Serine 333 lines the substrate pocket. Tyrosine 346 (proton acceptor) is an active-site residue.

It belongs to the short-chain dehydrogenases/reductases (SDR) family.

Its pathway is opine metabolism; mannopine biosynthesis. Its function is as follows. Reduces deoxy-fructosyl-glutamine to mannopine. This is Agropine synthesis reductase (mas1) from Rhizobium rhizogenes (Agrobacterium rhizogenes).